A 228-amino-acid polypeptide reads, in one-letter code: Lipoprotein-releasing system ATP-binding protein LolD (228 aa).

Residues 5–228 (FALSAISKSF…SGTLQNYTDY (224 aa)) enclose the ABC transporter domain. 40-47 (GPSGSGKS) is a binding site for ATP.

This sequence belongs to the ABC transporter superfamily. Lipoprotein translocase (TC 3.A.1.125) family. The complex is composed of two ATP-binding proteins (LolD) and two transmembrane proteins (LolC and LolE).

The protein resides in the cell inner membrane. Its function is as follows. Part of the ABC transporter complex LolCDE involved in the translocation of mature outer membrane-directed lipoproteins, from the inner membrane to the periplasmic chaperone, LolA. Responsible for the formation of the LolA-lipoprotein complex in an ATP-dependent manner. This is Lipoprotein-releasing system ATP-binding protein LolD from Ehrlichia ruminantium (strain Gardel).